The sequence spans 532 residues: MDITTNDLNHDDHHTPHGWKRWLFSTNHKDIGIMYIIFAIFAGIVGGLFSLLFRLELAMPGGTFLNHDFQLYNVLITAHAVIMVFFMIMPALFGGFGNYFVPLLIGAPDMAFPRLNNISFWLLVPAFILLMGSAFVDGGPGTGWTLYPPLSSISGHPGAAVDMAIFSLHLTGLSSILGSINLIVTIFNMRAPGMGLFKMPLFVWSILVTAFLIILAMPVLGGAITMLLTDRNFGTTFFKTDGGGDPVLFQHLFWFFGHPEVYIVILPGFGIVSQVISTFSRKPIFGYQGMVGAMVIIGFVGFIVWAHHMFTVGLSYNALIYFTAGTMIIAIPTGIKIFSWIATMWGGSITFPTPMLFSIGFIILFTIGGVTGIILSNSALDRVLHDTYYVVAHFHYTMSLGALFTAFAGFYYWFGKISGKQYPEILGKIHFWITFVGVNLTFFPQHFLGLAGMPRRIPDYPEAFAGWNMVSSIGAGISMAAALYFVFIVFYTLKYGKDCPNNPWGDGADTLEWTLTSPPPFHTFETPPHIEE.

8 helical membrane-spanning segments follow: residues I33–F53, V74–G94, G95–L115, I118–G138, M163–I183, P200–L220, L252–V272, and I284–V304. Fe(II)-heme a is bound at residue H79. The Cu cation site is built by H258 and Y262. 2 residues coordinate Cu cation: H307 and H308. Transmembrane regions (helical) follow at residues A318–F338 and M355–L375. H393 lines the heme a3 pocket. The next 3 membrane-spanning stretches (helical) occupy residues F394 to F414, F431 to A451, and I473 to L493. Position 395 (H395) interacts with Fe(II)-heme a.

This sequence belongs to the heme-copper respiratory oxidase family.

It localises to the cell membrane. The catalysed reaction is 4 Fe(II)-[cytochrome c] + O2 + 8 H(+)(in) = 4 Fe(III)-[cytochrome c] + 2 H2O + 4 H(+)(out). It participates in energy metabolism; oxidative phosphorylation. Its function is as follows. Cytochrome c oxidase is the component of the respiratory chain that catalyzes the reduction of oxygen to water. Subunits 1-3 form the functional core of the enzyme complex. CO I is the catalytic subunit of the enzyme. Electrons originating in cytochrome c are transferred via the copper A center of subunit 2 and heme A of subunit 1 to the bimetallic center formed by heme A3 and copper B. In Rickettsia bellii (strain RML369-C), this protein is Probable cytochrome c oxidase subunit 1 (ctaD).